Here is a 224-residue protein sequence, read N- to C-terminus: Large ribosomal subunit protein bL25 (224 aa).

The disordered stretch occupies residues 196 to 224 (VEEVDTDAEEVDAADVPATEQGSEEDKGE). Acidic residues predominate over residues 197-208 (EEVDTDAEEVDA).

The protein belongs to the bacterial ribosomal protein bL25 family. CTC subfamily. Part of the 50S ribosomal subunit; part of the 5S rRNA/L5/L18/L25 subcomplex. Contacts the 5S rRNA. Binds to the 5S rRNA independently of L5 and L18.

In terms of biological role, this is one of the proteins that binds to the 5S RNA in the ribosome where it forms part of the central protuberance. The polypeptide is Large ribosomal subunit protein bL25 (Psychrobacter sp. (strain PRwf-1)).